Consider the following 759-residue polypeptide: Polyribonucleotide nucleotidyltransferase (759 aa).

Mg(2+)-binding residues include Asp522 and Asp528. The 60-residue stretch at 588–647 folds into the KH domain; that stretch reads PRITTIKVPVDKIGEVIGPKGKMINSITEETGASISIEDDGTVFVGASNGEAAQAAIDKI. The region spanning 659-728 is the S1 motif domain; that stretch reads GERFLGTVVK…NRGKISLVLV (70 aa). A disordered region spans residues 734–759; sequence AEASDNGSATPSDKAPATADATTAGN. Over residues 741-759 the composition is skewed to low complexity; it reads SATPSDKAPATADATTAGN.

Belongs to the polyribonucleotide nucleotidyltransferase family. Mg(2+) serves as cofactor.

It localises to the cytoplasm. It carries out the reaction RNA(n+1) + phosphate = RNA(n) + a ribonucleoside 5'-diphosphate. Functionally, involved in mRNA degradation. Catalyzes the phosphorolysis of single-stranded polyribonucleotides processively in the 3'- to 5'-direction. This chain is Polyribonucleotide nucleotidyltransferase, found in Mycobacterium sp. (strain JLS).